The following is a 263-amino-acid chain: Putative TATA-binding protein pB263R (263 aa).

Belongs to the asfivirus B263R family.

Putative TATA-binding protein. In African swine fever virus (isolate Tick/Malawi/Lil 20-1/1983) (ASFV), this protein is Putative TATA-binding protein pB263R.